Reading from the N-terminus, the 485-residue chain is Elongation factor TuB, chloroplastic (485 aa).

The N-terminal 76 residues, 1 to 76 (MASISAASAT…TTHPRRFTVR (76 aa)), are a transit peptide targeting the chloroplast. A tr-type G domain is found at 86-290 (KPHVNIGTIG…NVDEYIPIPQ (205 aa)). Residues 95–102 (GHVDHGKT) form a G1 region. 95–102 (GHVDHGKT) lines the GTP pocket. The G2 stretch occupies residues 136-140 (GITIN). Residues 157-160 (DCPG) form a G3 region. Residues 157–161 (DCPGH) and 212–215 (NKQD) contribute to the GTP site. The segment at 212–215 (NKQD) is G4. Positions 250–252 (SAL) are G5.

Belongs to the TRAFAC class translation factor GTPase superfamily. Classic translation factor GTPase family. EF-Tu/EF-1A subfamily.

The protein resides in the plastid. It localises to the chloroplast. Functionally, this protein promotes the GTP-dependent binding of aminoacyl-tRNA to the A-site of ribosomes during protein biosynthesis. This is Elongation factor TuB, chloroplastic (TUFB) from Nicotiana sylvestris (Wood tobacco).